The sequence spans 119 residues: Large ribosomal subunit protein uL14m (119 aa).

The protein belongs to the universal ribosomal protein uL14 family.

The protein resides in the mitochondrion. In Tetrahymena pyriformis, this protein is Large ribosomal subunit protein uL14m.